A 321-amino-acid chain; its full sequence is Large ribosomal subunit protein uL10 (321 aa).

The interval 284 to 321 (SAGTAPTGGGAAAAAVEEKKEEPEEESDDDIGFSLFDD) is disordered. A compositionally biased stretch (acidic residues) spans 306-321 (PEEESDDDIGFSLFDD).

This sequence belongs to the universal ribosomal protein uL10 family. In terms of assembly, P0 forms a pentameric complex by interaction with dimers of P1 and P2. Phosphorylated.

Its function is as follows. Ribosomal protein P0 is the functional equivalent of E.coli protein L10. This Oxybasis rubra (Red goosefoot) protein is Large ribosomal subunit protein uL10.